We begin with the raw amino-acid sequence, 688 residues long: Glycine--tRNA ligase beta subunit (688 aa).

The protein belongs to the class-II aminoacyl-tRNA synthetase family. As to quaternary structure, tetramer of two alpha and two beta subunits.

It localises to the cytoplasm. It catalyses the reaction tRNA(Gly) + glycine + ATP = glycyl-tRNA(Gly) + AMP + diphosphate. The protein is Glycine--tRNA ligase beta subunit of Aliivibrio fischeri (strain ATCC 700601 / ES114) (Vibrio fischeri).